The primary structure comprises 157 residues: Lipoprotein signal peptidase (157 aa).

Helical transmembrane passes span 10–30 (FIFIGVFLLIFGTDQAIKYAI), 36–56 (YESSIIDIVLVFNKGVAFSLL), 58–78 (FLEGSLKYLQILLILGLFIFL), and 84–104 (LFKAHTIEFGMVFGAGVSNIL). Residues aspartate 114 and aspartate 131 contribute to the active site. The chain crosses the membrane as a helical span at residues 123–143 (DFAIFNFADVMIDVGVGVLLI).

This sequence belongs to the peptidase A8 family.

It localises to the cell inner membrane. The enzyme catalyses Release of signal peptides from bacterial membrane prolipoproteins. Hydrolyzes -Xaa-Yaa-Zaa-|-(S,diacylglyceryl)Cys-, in which Xaa is hydrophobic (preferably Leu), and Yaa (Ala or Ser) and Zaa (Gly or Ala) have small, neutral side chains.. Its pathway is protein modification; lipoprotein biosynthesis (signal peptide cleavage). This protein specifically catalyzes the removal of signal peptides from prolipoproteins. The polypeptide is Lipoprotein signal peptidase (Helicobacter acinonychis (strain Sheeba)).